Consider the following 302-residue polypeptide: tRNA dimethylallyltransferase (302 aa).

ATP is bound at residue 21–28 (GPTASGKS). 23 to 28 (TASGKS) is a substrate binding site.

This sequence belongs to the IPP transferase family. In terms of assembly, monomer. The cofactor is Mg(2+).

It catalyses the reaction adenosine(37) in tRNA + dimethylallyl diphosphate = N(6)-dimethylallyladenosine(37) in tRNA + diphosphate. Its function is as follows. Catalyzes the transfer of a dimethylallyl group onto the adenine at position 37 in tRNAs that read codons beginning with uridine, leading to the formation of N6-(dimethylallyl)adenosine (i(6)A). This is tRNA dimethylallyltransferase from Paracoccus denitrificans (strain Pd 1222).